The following is a 414-amino-acid chain: Arrestin domain-containing protein 3 (414 aa).

2 consecutive short sequence motifs (PPxY motif) follow at residues 346 to 349 (PPSY) and 391 to 394 (PPLY). The segment at 393–414 (LYSEIDPNPDQPADDRPSCPSR) is disordered. Basic and acidic residues predominate over residues 405-414 (ADDRPSCPSR).

Belongs to the arrestin family. As to quaternary structure, interacts (via PPxY motifs) with NEDD4 (via WW domains). Interacts with ADRB2. Interacts with ADRB3. Interacts with HGS (via PPxY motifs). Does not bind TXN (thioredoxin). Interacts with ITCH.

It is found in the cytoplasm. It localises to the cell membrane. Its subcellular location is the lysosome. The protein resides in the endosome. The protein localises to the early endosome. Adapter protein that plays a role in regulating cell-surface expression of adrenergic receptors and probably also other G protein-coupled receptors. Plays a role in NEDD4-mediated ubiquitination and endocytosis af activated ADRB2 and subsequent ADRB2 degradation. May recruit NEDD4 to ADRB2. Alternatively, may function as adapter protein that does not play a major role in recruiting NEDD4 to ADRB2, but rather plays a role in a targeting ADRB2 to endosomes. This chain is Arrestin domain-containing protein 3 (ARRDC3), found in Bos taurus (Bovine).